The sequence spans 175 residues: Large ribosomal subunit protein uL22y (175 aa).

The span at 153 to 163 shows a compositional bias: basic and acidic residues; it reads EKEEPVKKEPE. Residues 153–175 form a disordered region; the sequence is EKEEPVKKEPETQLAAKSKKSAA.

This sequence belongs to the universal ribosomal protein uL22 family.

This is Large ribosomal subunit protein uL22y (RPL17B) from Arabidopsis thaliana (Mouse-ear cress).